A 467-amino-acid chain; its full sequence is F-box only protein 6 (467 aa).

The F-box domain occupies 114-163; that stretch reads QEIWQEFPQDLFEDVVSRLPMATFFQFRAVCRKWNALIDSDSFSRCFTEL. Kelch repeat units lie at residues 163–211, 252–305, and 406–456; these read LPQT…MASA, GMTL…NFKS, and CLGN…IACG.

The chain is F-box only protein 6 (FBX6) from Arabidopsis thaliana (Mouse-ear cress).